Here is a 473-residue protein sequence, read N- to C-terminus: Adenosylhomocysteinase (473 aa).

Residues Thr64, Asp139, and Glu199 each contribute to the substrate site. 200–202 (TTT) serves as a coordination point for NAD(+). 2 residues coordinate substrate: Lys229 and Asp233. NAD(+)-binding positions include Asn234, 263–268 (GYGDVG), Glu286, Asn321, 342–344 (IGH), and Asn387.

This sequence belongs to the adenosylhomocysteinase family. NAD(+) serves as cofactor.

Its subcellular location is the cytoplasm. The enzyme catalyses S-adenosyl-L-homocysteine + H2O = L-homocysteine + adenosine. Its pathway is amino-acid biosynthesis; L-homocysteine biosynthesis; L-homocysteine from S-adenosyl-L-homocysteine: step 1/1. Functionally, may play a key role in the regulation of the intracellular concentration of adenosylhomocysteine. The protein is Adenosylhomocysteinase of Burkholderia mallei (strain SAVP1).